A 600-amino-acid chain; its full sequence is Chaperonin 60 subunit beta 1, chloroplastic (600 aa).

A compositionally biased stretch (polar residues) spans 1–12 (MASTFTATSSIG). Residues 1 to 23 (MASTFTATSSIGSMVAPNGHKSD) are disordered. A chloroplast-targeting transit peptide spans 1 to 54 (MASTFTATSSIGSMVAPNGHKSDKKLISKLSSSSFGRRQSVCPRPRRSSSAIVC). 2 positions are modified to phosphoserine: S101 and S478.

Belongs to the chaperonin (HSP60) family. As to quaternary structure, part of the Cpn60 complex composed of 7 alpha and 7 beta subunits. Can also form a complex composed of 14 beta subunits only. Both complexes show ATPase activity. The Cpn60 complex interacts with the Cpn10 complex. Interacts with RAB during heat stress. In terms of tissue distribution, expressed in leaves, stems, petioles and flowers.

The protein localises to the plastid. The protein resides in the chloroplast stroma. Binds RuBisCO small and large subunits and is implicated in the assembly of the enzyme oligomer. Involved in protein assisted folding. Required for proper plastid division. The chain is Chaperonin 60 subunit beta 1, chloroplastic (CPN60B1) from Arabidopsis thaliana (Mouse-ear cress).